The chain runs to 352 residues: Chorismate synthase (352 aa).

NADP(+) is bound by residues Arg48 and Arg54. FMN is bound by residues 125–127 (RAS), 238–239 (NA), Ala278, 293–297 (KPASS), and Arg319.

This sequence belongs to the chorismate synthase family. Homotetramer. FMNH2 serves as cofactor.

It catalyses the reaction 5-O-(1-carboxyvinyl)-3-phosphoshikimate = chorismate + phosphate. Its pathway is metabolic intermediate biosynthesis; chorismate biosynthesis; chorismate from D-erythrose 4-phosphate and phosphoenolpyruvate: step 7/7. Its function is as follows. Catalyzes the anti-1,4-elimination of the C-3 phosphate and the C-6 proR hydrogen from 5-enolpyruvylshikimate-3-phosphate (EPSP) to yield chorismate, which is the branch point compound that serves as the starting substrate for the three terminal pathways of aromatic amino acid biosynthesis. This reaction introduces a second double bond into the aromatic ring system. This chain is Chorismate synthase, found in Coxiella burnetii (strain RSA 493 / Nine Mile phase I).